The following is a 559-amino-acid chain: MSIDEAKEGGGGPAMSPRAFALAHQRDRGSFVGCSRIADYEVLGKLGEGTFGEVHRARSRKTGALVALKKIIMHNERDGFPITALREIKLLKLLSHKNVLRLEEMAIEHPPRTDKRTRPIVYMVTPYMDHDLSGLLDNPSVRFTEPQVKCYLLQLLEGLKYLHANHILHRDMKAANLLINNKGVLQIADFGLARHYEGDIPQPGKGSGEGKRDYTSLVVTRWYRPPELLMHLKRYTTAIDMWGVGCVFAEMLEGKPVLQGESDLHQLELVWDLCGTPSEETMPGWRTLPGGQAFSSKPRPGNLARRFEKHGPVVISLLKELFKLDWRSRINAIDALNHPYFRTAPLPALPGDLPTFEESHEFDRRKFQDRKAALPPAPKGGTVGRGAVVNSQGPDTGFSGRDGYGGGGRNGANGGRYPPYHRGPPPGDERVPSWHSARGLPPRPPMPADYHGSGPMDHTDGYRDRPPRRGPGGPPGGGGGPSNVDTYIPSYDRDGPAPRREDWRRRDDWDDRRGGVDRDRRRPEYDVRSRDSRTRSRTRSRSPVRDRDRGRDRDAYARR.

Residues tyrosine 40–phenylalanine 341 enclose the Protein kinase domain. ATP-binding positions include leucine 46–valine 54 and lysine 69. Aspartate 171 (proton acceptor) is an active-site residue. Basic and acidic residues predominate over residues serine 359 to alanine 372. A disordered region spans residues serine 359–arginine 559. A compositionally biased stretch (gly residues) spans glycine 400–glycine 414. Composition is skewed to basic and acidic residues over residues aspartate 457–proline 467, tyrosine 491–threonine 534, and proline 543–arginine 559.

The protein belongs to the protein kinase superfamily. CMGC Ser/Thr protein kinase family. CDC2/CDKX subfamily.

The protein localises to the nucleus. The enzyme catalyses L-seryl-[protein] + ATP = O-phospho-L-seryl-[protein] + ADP + H(+). The catalysed reaction is L-threonyl-[protein] + ATP = O-phospho-L-threonyl-[protein] + ADP + H(+). It carries out the reaction [DNA-directed RNA polymerase] + ATP = phospho-[DNA-directed RNA polymerase] + ADP + H(+). Functionally, serine/threonine-protein kinase involved in transcription regulation. Phosphorylates the mus-8/ubc2 ubiquitin-conjugating enzyme (E2), leading to monoubiquitination of histone H2B and the silencing of telomeric-associated genes. Also required for histone H3 methylation. Necessary for the recovery from pheromone-induced growth arrest in the cell cycle G1 phase. The polypeptide is Serine/threonine-protein kinase bur1 (stk-1) (Neurospora crassa (strain ATCC 24698 / 74-OR23-1A / CBS 708.71 / DSM 1257 / FGSC 987)).